The sequence spans 89 residues: MSLNAETKAKIVADFSRGTNDTGSPEVQVALLTAQINHLQGHFSVHSKDHHGRRGLLRMVSQRRKLLDYLKRKDDARYKDLISKLGLRR.

This sequence belongs to the universal ribosomal protein uS15 family. As to quaternary structure, part of the 30S ribosomal subunit. Forms a bridge to the 50S subunit in the 70S ribosome, contacting the 23S rRNA.

Functionally, one of the primary rRNA binding proteins, it binds directly to 16S rRNA where it helps nucleate assembly of the platform of the 30S subunit by binding and bridging several RNA helices of the 16S rRNA. In terms of biological role, forms an intersubunit bridge (bridge B4) with the 23S rRNA of the 50S subunit in the ribosome. The sequence is that of Small ribosomal subunit protein uS15 from Tolumonas auensis (strain DSM 9187 / NBRC 110442 / TA 4).